A 136-amino-acid chain; its full sequence is uncharacterized protein (136 aa).

The first 19 residues, Met1–Ala19, serve as a signal peptide directing secretion.

This is an uncharacterized protein from Methanocaldococcus jannaschii (strain ATCC 43067 / DSM 2661 / JAL-1 / JCM 10045 / NBRC 100440) (Methanococcus jannaschii).